Consider the following 96-residue polypeptide: Co-chaperonin GroES (96 aa).

It belongs to the GroES chaperonin family. As to quaternary structure, heptamer of 7 subunits arranged in a ring. Interacts with the chaperonin GroEL.

The protein resides in the cytoplasm. Together with the chaperonin GroEL, plays an essential role in assisting protein folding. The GroEL-GroES system forms a nano-cage that allows encapsulation of the non-native substrate proteins and provides a physical environment optimized to promote and accelerate protein folding. GroES binds to the apical surface of the GroEL ring, thereby capping the opening of the GroEL channel. This is Co-chaperonin GroES from Geotalea uraniireducens (strain Rf4) (Geobacter uraniireducens).